An 889-amino-acid polypeptide reads, in one-letter code: Mixed-linked glucan synthase 2 (889 aa).

The segment at 34–53 (AGADGQNGRRSPVAKRVNDG) is disordered. 2 helical membrane-spanning segments follow: residues 93–113 (ILHP…AFFA) and 123–143 (GVWL…SWVL). Asp213 is an active-site residue. Positions 265 to 293 (ELMSDHRRVRREYEEFKVRIDSLSSTIRQ) form a coiled coil. Positions 411 and 413 each coordinate substrate. Asp579 is an active-site residue. 6 helical membrane-spanning segments follow: residues 655-675 (TYPI…MWLI), 685-705 (FGEY…IGMF), 723-743 (FYMI…ALKL), 777-797 (LLIP…VAVG), 811-831 (LAVL…PFAL), and 842-862 (AVLF…YVAF).

The protein belongs to the glycosyltransferase 2 family. Plant cellulose synthase-like F subfamily.

Its subcellular location is the golgi apparatus membrane. Functionally, catalyzes both beta-1,3 and beta-1,4 glycosidic linkage on beta-D-glucan. Essential for (1,3;1,4)-beta-D-glucans synthesis in grasses and cereals (Poaceae). The mixed-linked glucans (which are not present in walls of dicotyledons or most other monocotyledonous plants) are particularly important constituents of the walls of the starchy endosperm and aleurone cells of cereal grains such as oats, wheat, rice and barley. They can account for up to 70% by weight of the wall. This is Mixed-linked glucan synthase 2 (CSLF2) from Oryza sativa subsp. japonica (Rice).